The chain runs to 274 residues: Short-chain dehydrogenase/reductase bsc3 (274 aa).

Ile14, Tyr170, Lys174, Ile203, and Thr205 together coordinate NADP(+). The active-site Proton donor is the Tyr170. The Lowers pKa of active site Tyr role is filled by Lys174.

It belongs to the short-chain dehydrogenases/reductases (SDR) family.

Its pathway is mycotoxin biosynthesis. Functionally, short-chain dehydrogenase/reductase; part of the gene cluster that mediates the biosynthesis of the diterpene glucoside brassicicene C. In the first step of the brassicicene C biosynthesis, the bifunctional diterpene synthase bsc8 that possesses both prenyl transferase and terpene cyclase activity, converts isopentenyl diphosphate and dimethylallyl diphosphate into geranylgeranyl diphosphate (GGDP) that is further converted into fusicocca-2,10(14)-diene, the first precursor for brassicicene C. Fusicocca-2,10(14)-diene is then substrate of cytochrome P450 monooxygenase bsc1 for hydroxylation at the C-8 position. Oxidation at C-16 position to aldehyde is then catalyzed by the cytochrome P450 monooyxygenase bsc7, yielding fusicocca-2,10(14)-diene-8-beta,16-diol. Follows the isomerization of the double bond and reduction of aldehyde to alcohol catalyzed by the short-chain dehydrogenase/reductase bsc3 to yield the diol compound fusicocca-1,10(14)-diene-8 beta,16-diol. The next step is the oxidation at the C-3 position of fusicocca-2,10(14)-diene-8-beta,16-diol catalyzed by the alpha-ketoglutarate dependent dioxygenase bsc9, to produce a triol compound. Methylation of the hydroxy group at position 16 is performed by the methyltransferase bsc6. 16-O-methylation is followed by oxidation at the C-13 position to ketone and an alkyl shift of the methyl group leads to brassicicene C. Although the probable acetyltransferase bsc4 is included in the gene cluster, no acetylation reactions are necessary for brassicicene C biosynthesis. However, the fact that brassicicene E, which is a structurally related compound having an acetoxy group at position 12, was previously isolated from another strain of A.brassicicola suggests that the ATCC 96836 strain might also produce a small amount of brassicicene E. In Alternaria brassicicola (Dark leaf spot agent), this protein is Short-chain dehydrogenase/reductase bsc3.